We begin with the raw amino-acid sequence, 494 residues long: Glutamyl-tRNA(Gln) amidotransferase subunit A, mitochondrial (494 aa).

Active-site charge relay system residues include K79 and S160. The active-site Acyl-ester intermediate is the S184.

It belongs to the amidase family. GatA subfamily. In terms of assembly, subunit of the heterotrimeric GatCAB amidotransferase (AdT) complex, composed of A, B and C subunits.

Its subcellular location is the mitochondrion. It catalyses the reaction L-glutamyl-tRNA(Gln) + L-glutamine + ATP + H2O = L-glutaminyl-tRNA(Gln) + L-glutamate + ADP + phosphate + H(+). Its function is as follows. Allows the formation of correctly charged Gln-tRNA(Gln) through the transamidation of misacylated Glu-tRNA(Gln) in the mitochondria. The reaction takes place in the presence of glutamine and ATP through an activated gamma-phospho-Glu-tRNA(Gln). This chain is Glutamyl-tRNA(Gln) amidotransferase subunit A, mitochondrial, found in Aedes aegypti (Yellowfever mosquito).